A 160-amino-acid polypeptide reads, in one-letter code: NADH-quinone oxidoreductase subunit I (160 aa).

2 consecutive 4Fe-4S ferredoxin-type domains span residues 51–80 (RRYKNGEERCIACKLCEVVCPAQAITIEAA) and 91–120 (TKYDIDMTKCIYCGFCQEACPVDAIVEGPN). Cys60, Cys63, Cys66, Cys70, Cys100, Cys103, Cys106, and Cys110 together coordinate [4Fe-4S] cluster.

This sequence belongs to the complex I 23 kDa subunit family. As to quaternary structure, NDH-1 is composed of 14 different subunits. Subunits NuoA, H, J, K, L, M, N constitute the membrane sector of the complex. It depends on [4Fe-4S] cluster as a cofactor.

The protein localises to the cell inner membrane. The enzyme catalyses a quinone + NADH + 5 H(+)(in) = a quinol + NAD(+) + 4 H(+)(out). In terms of biological role, NDH-1 shuttles electrons from NADH, via FMN and iron-sulfur (Fe-S) centers, to quinones in the respiratory chain. The immediate electron acceptor for the enzyme in this species is believed to be ubiquinone. Couples the redox reaction to proton translocation (for every two electrons transferred, four hydrogen ions are translocated across the cytoplasmic membrane), and thus conserves the redox energy in a proton gradient. This is NADH-quinone oxidoreductase subunit I from Neorickettsia sennetsu (strain ATCC VR-367 / Miyayama) (Ehrlichia sennetsu).